The following is a 764-amino-acid chain: Irregular chiasm C-roughest protein (764 aa).

An N-terminal signal peptide occupies residues 1–19; that stretch reads MLHTMQLLLLATIVGMVRS. The Extracellular portion of the chain corresponds to 20–533; the sequence is SPYTSYQNQR…QAKKSVSLLM (514 aa). Ig-like C2-type domains follow at residues 21 to 120, 132 to 230, 237 to 343, 346 to 419, and 430 to 530; these read PYTS…PAIR, PEAP…AKIR, PKVK…LDIS, PSFR…AEIS, and PAIG…KSVS. Cystine bridges form between Cys49–Cys107, Cys155–Cys214, Cys281–Cys325, Cys367–Cys408, and Cys450–Cys508. Residues Asn211, Asn313, Asn393, Asn400, and Asn507 are each glycosylated (N-linked (GlcNAc...) asparagine). Residues 534–556 traverse the membrane as a helical segment; it reads TIVGGISVVAFLLVLTILVVVYI. Over 557–764 the chain is Cytoplasmic; that stretch reads KCKKRTKLPP…SSLLPPPTAV (208 aa). Disordered stretches follow at residues 640–660 and 691–719; these read HQNQ…HHTQ and NGLP…STTA. Residues 692 to 701 are compositionally biased toward polar residues; it reads GLPSLQSTTA. The segment covering 702-719 has biased composition (low complexity); sequence SVVSSSPNGSCSNQSTTA.

As to expression, postembryonic expression is strong in the developing optic lobe and in the eye imaginal disk.

The protein localises to the membrane. Its function is as follows. Required for correct axonal pathway formation in the optic lobe and for programmed cell death in the developing retina. The polypeptide is Irregular chiasm C-roughest protein (rst) (Drosophila melanogaster (Fruit fly)).